Here is a 107-residue protein sequence, read N- to C-terminus: Nucleoid-associated protein RBE_0048 (107 aa).

The protein belongs to the YbaB/EbfC family. In terms of assembly, homodimer.

Its subcellular location is the cytoplasm. The protein localises to the nucleoid. In terms of biological role, binds to DNA and alters its conformation. May be involved in regulation of gene expression, nucleoid organization and DNA protection. The protein is Nucleoid-associated protein RBE_0048 of Rickettsia bellii (strain RML369-C).